The primary structure comprises 1224 residues: DNA-directed RNA polymerase subunit beta'' (1224 aa).

Residues C223, C297, C304, and C307 each contribute to the Zn(2+) site.

This sequence belongs to the RNA polymerase beta' chain family. RpoC2 subfamily. In plastids the minimal PEP RNA polymerase catalytic core is composed of four subunits: alpha, beta, beta', and beta''. When a (nuclear-encoded) sigma factor is associated with the core the holoenzyme is formed, which can initiate transcription. The cofactor is Zn(2+).

It is found in the plastid. It localises to the chloroplast. It carries out the reaction RNA(n) + a ribonucleoside 5'-triphosphate = RNA(n+1) + diphosphate. Functionally, DNA-dependent RNA polymerase catalyzes the transcription of DNA into RNA using the four ribonucleoside triphosphates as substrates. This chain is DNA-directed RNA polymerase subunit beta'', found in Porphyra purpurea (Red seaweed).